The sequence spans 901 residues: Protein SOK1 (901 aa).

Disordered stretches follow at residues 1-87 (MDQP…QNII), 106-139 (RSSG…SDLK), and 162-231 (NDDN…NASN). A compositionally biased stretch (low complexity) spans 10–51 (PTTASNPAPSSTNSSSAPSATNSKQERSSSSLSKPSSVVPSK). Residues serine 40 and serine 53 each carry the phosphoserine modification. 2 stretches are compositionally biased toward polar residues: residues 74 to 87 (GDTS…QNII) and 106 to 115 (RSSGVITPSM). Low complexity predominate over residues 116-138 (SLNASTNATNNDSSGNSANSSDL). Phosphoserine is present on residues serine 191 and serine 193. The span at 220–231 (AAQQQPPGNASN) shows a compositional bias: polar residues. Serine 245 carries the phosphoserine modification.

It belongs to the TCP11 family.

The protein localises to the nucleus. High copy suppressor of a cyclic AMP-dependent protein kinase mutant. This chain is Protein SOK1 (SOK1), found in Saccharomyces cerevisiae (strain ATCC 204508 / S288c) (Baker's yeast).